Reading from the N-terminus, the 289-residue chain is Agamous-like MADS-box protein AGL93 (289 aa).

Residues 18–78 (QTCFKKSSLS…GKLIKTWPDD (61 aa)) form the MADS-box domain. Positions 151-197 (EFGQTRAVSSTTNPLSPPPSLIEDHRHQQRTEPLMSGVSNTEQDLST) are disordered. Residues 187–197 (GVSNTEQDLST) are compositionally biased toward polar residues.

As to expression, expressed in pollen.

It is found in the nucleus. Probable transcription factor. This chain is Agamous-like MADS-box protein AGL93, found in Arabidopsis thaliana (Mouse-ear cress).